Consider the following 352-residue polypeptide: Geranylgeranyl transferase type-1 subunit beta (352 aa).

4 PFTB repeats span residues 135 to 180, 187 to 228, 236 to 276, and 283 to 325; these read VNKK…FILD, KESA…SLLG, FKEQ…MMID, and FASI…SFGN. Residues 213-215 and 255-258 contribute to the geranylgeranyl diphosphate site; these read HGG and RTNK. Zn(2+) is bound by residues aspartate 261 and cysteine 263. 264-267 lines the geranylgeranyl diphosphate pocket; the sequence is YAFW. Histidine 313 contacts Zn(2+).

The protein belongs to the protein prenyltransferase subunit beta family. Heterodimer of an alpha and a beta subunit. The cofactor is Zn(2+). It depends on Mg(2+) as a cofactor.

The enzyme catalyses geranylgeranyl diphosphate + L-cysteinyl-[protein] = S-geranylgeranyl-L-cysteinyl-[protein] + diphosphate. Its function is as follows. Catalyzes the transfer of a geranyl-geranyl moiety from geranyl-geranyl pyrophosphate to a cysteine at the fourth position from the C-terminus of proteins having the C-terminal sequence Cys-aliphatic-aliphatic-X. The sequence is that of Geranylgeranyl transferase type-1 subunit beta (pggt1b) from Dictyostelium discoideum (Social amoeba).